The following is a 547-amino-acid chain: Phosphoethanolamine transferase EptA (547 aa).

Residues 1 to 9 (MLKRLLKRP) lie on the Cytoplasmic side of the membrane. Residues 10-30 (SLNLLAWLLLAAFYISICLNI) traverse the membrane as a helical segment. The Periplasmic segment spans residues 31–47 (AFFKQVLQALPLDSLHN). Residues 48–68 (VLVFLSMPVVAFSVINIVLTL) traverse the membrane as a helical segment. Residues 69 to 79 (SSFLWLNRPLA) lie on the Cytoplasmic side of the membrane. Residues 80 to 100 (CLFILVGAAAQYFIMTYGIVI) traverse the membrane as a helical segment. Topologically, residues 101 to 123 (DRSMIANIIDTTPAESYALMTPQ) are periplasmic. A helical membrane pass occupies residues 124–144 (MLLTLGFSGVLAALIACWIKI). Residues 145–154 (KPATSRLRSV) are Cytoplasmic-facing. The chain crosses the membrane as a helical span at residues 155 to 175 (LFRGANILVSVLLILLVAALF). Residues 176-547 (YKDYASLFRN…ILQTCRRVSE (372 aa)) lie on the Periplasmic side of the membrane.

This sequence belongs to the phosphoethanolamine transferase family. EptA subfamily. As to quaternary structure, has been isolated as a 91 kDa complex containing ZipA-EptA and an unidentified 24 kDa protein.

Its subcellular location is the cell inner membrane. Its function is as follows. Catalyzes the addition of a phosphoethanolamine moiety to the lipid A. The phosphoethanolamine modification is required for resistance to polymyxin. This Escherichia coli (strain K12) protein is Phosphoethanolamine transferase EptA (eptA).